A 123-amino-acid chain; its full sequence is Large ribosomal subunit protein bL12 (123 aa).

The protein belongs to the bacterial ribosomal protein bL12 family. As to quaternary structure, homodimer. Part of the ribosomal stalk of the 50S ribosomal subunit. Forms a multimeric L10(L12)X complex, where L10 forms an elongated spine to which 2 to 4 L12 dimers bind in a sequential fashion. Binds GTP-bound translation factors.

Its function is as follows. Forms part of the ribosomal stalk which helps the ribosome interact with GTP-bound translation factors. Is thus essential for accurate translation. In Acholeplasma laidlawii (strain PG-8A), this protein is Large ribosomal subunit protein bL12.